The sequence spans 261 residues: MEVVIVPDAADAAALVADTIGALLEREPEPVLGLATGSSPLAVYDELAARYERGEVSFANARAFMLDEYVGLPADHPERYRTVIEREFAGRVDFAPGAVQGPDGTAEDVAAACAAYEQAITASGGVDLQILGIGTDGHIAFNEPGSSLASRTRIKTLTEQTRRDNARFFGGDVDAVPTHCLTQGLATIMAAKHIVLLASGRGKAEAIHHLVEGAVSAMWPATILQHHPHVSVLVDPAAASRLQLADYYRQTYAAKPDWQGL.

Residue D67 is the Proton acceptor; for enolization step of the active site. D136 acts as the For ring-opening step in catalysis. The active-site Proton acceptor; for ring-opening step is the H138. The For ring-opening step role is filled by E143.

Belongs to the glucosamine/galactosamine-6-phosphate isomerase family. NagB subfamily.

It carries out the reaction alpha-D-glucosamine 6-phosphate + H2O = beta-D-fructose 6-phosphate + NH4(+). The protein operates within amino-sugar metabolism; N-acetylneuraminate degradation; D-fructose 6-phosphate from N-acetylneuraminate: step 5/5. Its function is as follows. Catalyzes the reversible isomerization-deamination of glucosamine 6-phosphate (GlcN6P) to form fructose 6-phosphate (Fru6P) and ammonium ion. The polypeptide is Glucosamine-6-phosphate deaminase (Beutenbergia cavernae (strain ATCC BAA-8 / DSM 12333 / CCUG 43141 / JCM 11478 / NBRC 16432 / NCIMB 13614 / HKI 0122)).